The primary structure comprises 428 residues: L-rhamnose isomerase (428 aa).

Residues His260, Asp292, and Asp294 each coordinate Mn(2+).

The protein belongs to the rhamnose isomerase family. It depends on Mn(2+) as a cofactor.

It is found in the cytoplasm. It carries out the reaction L-rhamnopyranose = L-rhamnulose. It functions in the pathway carbohydrate degradation; L-rhamnose degradation; glycerone phosphate from L-rhamnose: step 1/3. Its function is as follows. Catalyzes the interconversion of L-rhamnose and L-rhamnulose. The protein is L-rhamnose isomerase of Enterococcus faecalis (strain ATCC 700802 / V583).